The sequence spans 292 residues: tRNA-cytidine(32) 2-sulfurtransferase (292 aa).

The PP-loop motif motif lies at Ser-54–Ser-59. [4Fe-4S] cluster-binding residues include Cys-129, Cys-132, and Cys-220.

The protein belongs to the TtcA family. As to quaternary structure, homodimer. Mg(2+) is required as a cofactor. It depends on [4Fe-4S] cluster as a cofactor.

Its subcellular location is the cytoplasm. The catalysed reaction is cytidine(32) in tRNA + S-sulfanyl-L-cysteinyl-[cysteine desulfurase] + AH2 + ATP = 2-thiocytidine(32) in tRNA + L-cysteinyl-[cysteine desulfurase] + A + AMP + diphosphate + H(+). It participates in tRNA modification. Catalyzes the ATP-dependent 2-thiolation of cytidine in position 32 of tRNA, to form 2-thiocytidine (s(2)C32). The sulfur atoms are provided by the cysteine/cysteine desulfurase (IscS) system. The polypeptide is tRNA-cytidine(32) 2-sulfurtransferase (Cereibacter sphaeroides (strain ATCC 17025 / ATH 2.4.3) (Rhodobacter sphaeroides)).